The sequence spans 502 residues: Neuronal acetylcholine receptor subunit alpha-7 (502 aa).

A signal peptide spans 1-22; the sequence is MCGRRGGIWLALAAALLHVSLQ. Residues 23–233 are Extracellular-facing; sequence GEFQRRLYKE…VTMRRRTLYY (211 aa). Ca(2+) contacts are provided by R42 and V44. N-linked (GlcNAc...) asparagine glycans are attached at residues N46, N90, and N133. A disulfide bridge connects residues C150 and C164. Ca(2+) is bound by residues S172 and Y210. An intrachain disulfide couples C212 to C213. The next 3 helical transmembrane spans lie at 234 to 254, 262 to 282, and 295 to 315; these read GLNL…VFLL, ISLG…VAEI, and QYFA…VIVL. Residues 260–267 form an essential for TMEM35A/NACHO-mediated proper subunit assembly and trafficking to cell membrane region; sequence EKISLGIT. Residues 316–469 are Cytoplasmic-facing; that stretch reads RYHHHDPDGG…WKFAACVVDR (154 aa). A helical membrane pass occupies residues 470–490; sequence LCLMAFSVFTIICTIGILMSA.

This sequence belongs to the ligand-gated ion channel (TC 1.A.9) family. Acetylcholine receptor (TC 1.A.9.1) subfamily. Alpha-7/CHRNA7 sub-subfamily. In terms of assembly, homopentamer. Can also form heteropentamers with CHRNB2, mainly found in basal forebrain cholinergic neurons. Interacts with RIC3; which is required for proper folding and assembly. Interacts with LYPD6. Interacts with CANX. Post-translationally, glycosylations at Asn-46, Asn-90 and Asn-133 are essential for TMEM35A/NACHO-mediated proper subunit assembly and trafficking to the cell membrane. In terms of tissue distribution, higly expressed in brain. ALso expressed in immune cells sucha as macrophages.

The protein resides in the postsynaptic cell membrane. It localises to the cell membrane. The catalysed reaction is K(+)(in) = K(+)(out). It catalyses the reaction Na(+)(in) = Na(+)(out). The enzyme catalyses Ca(2+)(in) = Ca(2+)(out). It carries out the reaction choline(out) = choline(in). The catalysed reaction is NH4(+)(in) = NH4(+)(out). It catalyses the reaction L-arginine(in) = L-arginine(out). The enzyme catalyses guanidine(out) = guanidine(in). Activated by a myriad of ligands such as acetylcholine, cytisine, nicotine, choline and epibatidine. Oligomeric amyloid-beta protein 42 activates specifially CHRNA7:CHRNB2 nAchRs. Activity is modulated by positive allosteric modulators (PAMs), such as flavonoids, with a wide range of chemical diversity, pharmacological sensitivity and efficacy. AChR activity is inhibited by the antagonists alpha-conotoxons RgIA, ImI and ImII, small disulfide-constrained peptides from cone snails. Functionally, component of neuronal acetylcholine receptors (nAChRs) that function as pentameric, ligand-gated cation channels with high calcium permeability among other activities. nAChRs are excitatory neurotrasnmitter receptors formed by a collection of nAChR subunits known to mediate synaptic transmission in the nervous system and the neuromuscular junction. Each nAchR subunit confers differential attributes to channel properties, including activation, deactivation and desensitization kinetics, pH sensitivity, cation permeability, and binding to allosteric modulators. CHRNA7 forms homopentameric neuronal acetylcholine receptors abundantly expressed in the central nervous system, characterized by fast desensitization and high calcium permeability. Also forms heteropentamers with CHRNB2, mainly expressed in basal forebrain cholinergic neurons. Involved in the modulation of calcium-dependent signaling pathways and influences the release of neurotransmitters, including dopamine, glutamate and GABA. Involved in the modulation of calcium-dependent signaling pathways and influences the release of neurotransmitters, including dopamine, glutamate and GABA. Also expressed in non-neuronal cells such as immune cells like lymphocytes, monocytes and macrophages. In T cells, activation induces metabotropic signaling that results in an increase of intracellular Ca2+ concentrations, independent of ionotropic receptor functions. In macrophages, required for acetylcholine-mediated inhibition of TNF and other inflammatory cytokine release. Once activated by acetylcholine, nicotine or other agonists, selectively inhibits production of pro-inflammatory cytokines while leaving anti-inflammatory cytokines undisturbed. Stimulates the cholinergic anti-inflammatory pathway, controlling inflammation by inhibiting NFKB nuclear translocation and activating the JAK2-STAT3 pathway, independently of ion channel activity. Also expressed in the urothelium where it modulates reflex bladder activity by increasing intracellular calcium through internal stores and decreasing basal ATP release. The sequence is that of Neuronal acetylcholine receptor subunit alpha-7 (Chrna7) from Mus musculus (Mouse).